A 258-amino-acid polypeptide reads, in one-letter code: MRPLILLSNDDGYSAPGLTAVRDELARHADVVVCAPAVNQSATSHSLSLHRVLRLLEAAPGVFAVDGTPADCIYVALHAGTRVLPRRPDLVVSGMNHGLNLGADIFYSGTVAAAREGALRGVPSIALSADAGASLPAAAALGVKLALALHRAAGQEGRRPAPLLNVNIPAGSSWPVRATRMGARLYTEEVIFRRDPRGHEYLWIGGAGVRHDLVPGSDTEAYDAGAVSVTPLTLDLFAAQHEGIAGLLAAELNDGPIP.

4 residues coordinate a divalent metal cation: aspartate 10, aspartate 11, serine 41, and asparagine 96.

The protein belongs to the SurE nucleotidase family. A divalent metal cation serves as cofactor.

It is found in the cytoplasm. The catalysed reaction is a ribonucleoside 5'-phosphate + H2O = a ribonucleoside + phosphate. Its function is as follows. Nucleotidase that shows phosphatase activity on nucleoside 5'-monophosphates. This is 5'-nucleotidase SurE from Sorangium cellulosum (strain So ce56) (Polyangium cellulosum (strain So ce56)).